The primary structure comprises 344 residues: tRNA(Ile)-lysidine synthase (344 aa).

An ATP-binding site is contributed by 35-40 (SGGPDS).

The protein belongs to the tRNA(Ile)-lysidine synthase family.

It is found in the cytoplasm. It catalyses the reaction cytidine(34) in tRNA(Ile2) + L-lysine + ATP = lysidine(34) in tRNA(Ile2) + AMP + diphosphate + H(+). Its function is as follows. Ligates lysine onto the cytidine present at position 34 of the AUA codon-specific tRNA(Ile) that contains the anticodon CAU, in an ATP-dependent manner. Cytidine is converted to lysidine, thus changing the amino acid specificity of the tRNA from methionine to isoleucine. The polypeptide is tRNA(Ile)-lysidine synthase (Methylobacterium sp. (strain 4-46)).